We begin with the raw amino-acid sequence, 265 residues long: Di-trans,poly-cis-undecaprenyl-diphosphate synthase (265 aa).

The RXG motif; crucial for prenyltransferase activity motif lies at 236–238 (RFG).

This sequence belongs to the UPP synthase family. Mg(2+) serves as cofactor.

It catalyses the reaction 8 isopentenyl diphosphate + (2E,6E)-farnesyl diphosphate = di-trans,octa-cis-undecaprenyl diphosphate + 8 diphosphate. It functions in the pathway protein modification; protein glycosylation. The protein operates within lipid metabolism. Cis-prenyl transferase involved in the synthesis of dolichol, a long-chain polyprenol that is utilized as a sugar carrier in protein glycosylation in the endoplasmic reticulum (ER). Catalyzes the sequential condensation of isopentenyl pyrophosphate (IPP) with farnesyl pyrophosphate (FPP) to produce a polyprenyl pyrophosphate which contains 11 (major) and 12 (minor) isoprene units. The polypeptide is Di-trans,poly-cis-undecaprenyl-diphosphate synthase (Giardia intestinalis (strain ATCC 50803 / WB clone C6) (Giardia lamblia)).